A 381-amino-acid polypeptide reads, in one-letter code: Prostatic acid phosphatase (381 aa).

Residues M1–A31 form the signal peptide. R42 provides a ligand contact to substrate. H43 acts as the Nucleophile in catalysis. Residue R46 participates in substrate binding. N93 carries N-linked (GlcNAc...) asparagine glycosylation. R110 is a substrate binding site. 3 disulfides stabilise this stretch: C160–C371, C214–C312, and C346–C350. A glycan (N-linked (GlcNAc...) asparagine) is linked at N219. H288 contacts substrate. Catalysis depends on D289, which acts as the Proton donor. N-linked (GlcNAc...) asparagine glycosylation occurs at N332.

This sequence belongs to the histidine acid phosphatase family. In terms of assembly, homodimer; dimer formation is required for phosphatase activity. Post-translationally, N-glycosylated. Expressed in prostate epithelium. Also expressed in the pelvic nerve and sacral spinal cord. Localizes in peptidergic and non-peptidergic nociceptive (pain-sensing) neurons.

The protein localises to the secreted. The protein resides in the cell membrane. It localises to the lysosome membrane. It carries out the reaction a phosphate monoester + H2O = an alcohol + phosphate. The catalysed reaction is a ribonucleoside 5'-phosphate + H2O = a ribonucleoside + phosphate. It catalyses the reaction 1-(9Z-octadecenoyl)-sn-glycero-3-phosphate + H2O = 1-(9Z-octadecenoyl)-sn-glycerol + phosphate. The enzyme catalyses O-phospho-L-tyrosyl-[protein] + H2O = L-tyrosyl-[protein] + phosphate. Inhibited by L(+)-tartrate. Its function is as follows. A non-specific tyrosine phosphatase that dephosphorylates a diverse number of substrates under acidic conditions (pH 4-6) including alkyl, aryl, and acyl orthophosphate monoesters and phosphorylated proteins. Has lipid phosphatase activity and inactivates lysophosphatidic acid in seminal plasma. Functionally, in addition to its tyrosine phosphatase activity, also has ecto-5'-nucleotidase activity in dorsal root ganglion (DRG) neurons. Generates adenosine from AMP. This extracellular adenosine leads to a decrease in chronic pain by activating A1R in nociceptive neurons. This is Prostatic acid phosphatase (Acp3) from Rattus norvegicus (Rat).